The chain runs to 167 residues: Ureidoglycolate lyase (167 aa).

This sequence belongs to the ureidoglycolate lyase family. In terms of assembly, homodimer. It depends on Ni(2+) as a cofactor.

It catalyses the reaction (S)-ureidoglycolate = urea + glyoxylate. It participates in nitrogen metabolism; (S)-allantoin degradation. Its function is as follows. Catalyzes the catabolism of the allantoin degradation intermediate (S)-ureidoglycolate, generating urea and glyoxylate. Involved in the utilization of allantoin as nitrogen source. In Pseudomonas fluorescens (strain Pf0-1), this protein is Ureidoglycolate lyase.